The primary structure comprises 221 residues: Transcription repressor OFP8 (221 aa).

Positions glutamate 124–aspartate 138 are enriched in acidic residues. The disordered stretch occupies residues glutamate 124–serine 147. The 60-residue stretch at valine 158 to threonine 217 folds into the OVATE domain.

Expressed in roots, rosette and cauline leaves, shoots, stems, flower buds and siliques.

The protein resides in the nucleus. Functionally, transcriptional repressor that regulates multiple aspects of plant growth and development through the regulation of BEL1-LIKE (BLH) and KNOX TALE (KNAT) homeodomain transcription factors. The sequence is that of Transcription repressor OFP8 (OFP8) from Arabidopsis thaliana (Mouse-ear cress).